We begin with the raw amino-acid sequence, 163 residues long: Crossover junction endodeoxyribonuclease RuvC (163 aa).

Active-site residues include Asp-7, Glu-67, and Asp-140. Residues Asp-7, Glu-67, and Asp-140 each coordinate Mg(2+).

It belongs to the RuvC family. In terms of assembly, homodimer which binds Holliday junction (HJ) DNA. The HJ becomes 2-fold symmetrical on binding to RuvC with unstacked arms; it has a different conformation from HJ DNA in complex with RuvA. In the full resolvosome a probable DNA-RuvA(4)-RuvB(12)-RuvC(2) complex forms which resolves the HJ. It depends on Mg(2+) as a cofactor.

The protein resides in the cytoplasm. The catalysed reaction is Endonucleolytic cleavage at a junction such as a reciprocal single-stranded crossover between two homologous DNA duplexes (Holliday junction).. In terms of biological role, the RuvA-RuvB-RuvC complex processes Holliday junction (HJ) DNA during genetic recombination and DNA repair. Endonuclease that resolves HJ intermediates. Cleaves cruciform DNA by making single-stranded nicks across the HJ at symmetrical positions within the homologous arms, yielding a 5'-phosphate and a 3'-hydroxyl group; requires a central core of homology in the junction. The consensus cleavage sequence is 5'-(A/T)TT(C/G)-3'. Cleavage occurs on the 3'-side of the TT dinucleotide at the point of strand exchange. HJ branch migration catalyzed by RuvA-RuvB allows RuvC to scan DNA until it finds its consensus sequence, where it cleaves and resolves the cruciform DNA. In Petrotoga mobilis (strain DSM 10674 / SJ95), this protein is Crossover junction endodeoxyribonuclease RuvC.